Reading from the N-terminus, the 836-residue chain is Phenylalanine--tRNA ligase beta subunit (836 aa).

Positions Pro44–Arg160 constitute a tRNA-binding domain. In terms of domain architecture, B5 spans Pro420–Thr495. Mg(2+) is bound by residues Asp473, Asp479, Glu482, and Glu483. An FDX-ACB domain is found at Ser742–Arg835.

It belongs to the phenylalanyl-tRNA synthetase beta subunit family. Type 1 subfamily. Tetramer of two alpha and two beta subunits. Requires Mg(2+) as cofactor.

The protein localises to the cytoplasm. It carries out the reaction tRNA(Phe) + L-phenylalanine + ATP = L-phenylalanyl-tRNA(Phe) + AMP + diphosphate + H(+). The polypeptide is Phenylalanine--tRNA ligase beta subunit (Corynebacterium diphtheriae (strain ATCC 700971 / NCTC 13129 / Biotype gravis)).